We begin with the raw amino-acid sequence, 407 residues long: MKEFKTLEESLEAARYILPESLYKELVETVEKEDGLSEEDKISVVKETIRTYLRSLAQPGEAVGTVAAQSIGEPGTQMTLRTFHYAGIMEFDVTLGLPRLIEIVDAKQTPSQPLMYIYLKDEYAKDLEKAKEAARKIEYTTLEKIIDNIEWDLGDRVVAIVINAEYMEDKGVTVDMVLEALDKSKLGKVVEDGVREVSEGGVKKVIVYFEISDKQLPDEELFNSNAYHKVLEKLKNTYIKGIKGIRKVTVRREEGEDSYEYMLIVEGSNLREVLMLPEVDHRRSISNDIQEIAQVLGIEAARTAIIEEIKRVLEDSGLDVDIRHLMLIADLMTWPGYVRQIGRLGVVGEKPSPLARAAFEVTVKQLYEAAVWGEEEEFAGVTENIIAGLPPRVGTGSVLLRMGAARK.

It belongs to the RNA polymerase beta' chain family. In terms of assembly, part of the RNA polymerase complex.

It localises to the cytoplasm. The catalysed reaction is RNA(n) + a ribonucleoside 5'-triphosphate = RNA(n+1) + diphosphate. DNA-dependent RNA polymerase (RNAP) catalyzes the transcription of DNA into RNA using the four ribonucleoside triphosphates as substrates. Forms part of the jaw domain. The chain is DNA-directed RNA polymerase subunit Rpo1C from Aeropyrum pernix (strain ATCC 700893 / DSM 11879 / JCM 9820 / NBRC 100138 / K1).